The primary structure comprises 284 residues: Diaminopimelate epimerase (284 aa).

Residues Asn-21, Gln-54, and Asn-74 each coordinate substrate. Cys-83 functions as the Proton donor in the catalytic mechanism. Substrate is bound by residues 84–85 (GN), Asn-167, Asn-200, and 218–219 (ER). The active-site Proton acceptor is Cys-227. Substrate is bound at residue 228–229 (GS).

This sequence belongs to the diaminopimelate epimerase family. As to quaternary structure, homodimer.

It is found in the cytoplasm. The enzyme catalyses (2S,6S)-2,6-diaminopimelate = meso-2,6-diaminopimelate. It participates in amino-acid biosynthesis; L-lysine biosynthesis via DAP pathway; DL-2,6-diaminopimelate from LL-2,6-diaminopimelate: step 1/1. Catalyzes the stereoinversion of LL-2,6-diaminopimelate (L,L-DAP) to meso-diaminopimelate (meso-DAP), a precursor of L-lysine and an essential component of the bacterial peptidoglycan. This is Diaminopimelate epimerase from Buchnera aphidicola subsp. Acyrthosiphon pisum (strain APS) (Acyrthosiphon pisum symbiotic bacterium).